We begin with the raw amino-acid sequence, 122 residues long: Small ribosomal subunit protein uS13 (122 aa).

The segment at 98–122 (VRGQRTHTNARTRKGPAKAIAGKKK) is disordered.

It belongs to the universal ribosomal protein uS13 family. As to quaternary structure, part of the 30S ribosomal subunit. Forms a loose heterodimer with protein S19. Forms two bridges to the 50S subunit in the 70S ribosome.

In terms of biological role, located at the top of the head of the 30S subunit, it contacts several helices of the 16S rRNA. In the 70S ribosome it contacts the 23S rRNA (bridge B1a) and protein L5 of the 50S subunit (bridge B1b), connecting the 2 subunits; these bridges are implicated in subunit movement. Contacts the tRNAs in the A and P-sites. The chain is Small ribosomal subunit protein uS13 from Ruegeria sp. (strain TM1040) (Silicibacter sp.).